Consider the following 335-residue polypeptide: Serpentine receptor class alpha-25 (335 aa).

A run of 5 helical transmembrane segments spans residues 22–42 (IPVKISFLIIATVIFLSFYFA), 151–171 (LLIIQCLLSFGTYYVGLYGVP), 195–215 (FRTVVMVFCIIVIIFVYYLSV), 245–265 (CILIVLQFACILMSSYGVNYI), and 280–300 (LAPFFAGVTYASLCLPLVIYF).

The protein belongs to the nematode receptor-like protein sra family.

It is found in the membrane. The sequence is that of Serpentine receptor class alpha-25 (sra-25) from Caenorhabditis elegans.